We begin with the raw amino-acid sequence, 473 residues long: ATP synthase subunit beta (473 aa).

Residue 153-160 (GGAGVGKT) coordinates ATP.

This sequence belongs to the ATPase alpha/beta chains family. F-type ATPases have 2 components, CF(1) - the catalytic core - and CF(0) - the membrane proton channel. CF(1) has five subunits: alpha(3), beta(3), gamma(1), delta(1), epsilon(1). CF(0) has three main subunits: a(1), b(2) and c(9-12). The alpha and beta chains form an alternating ring which encloses part of the gamma chain. CF(1) is attached to CF(0) by a central stalk formed by the gamma and epsilon chains, while a peripheral stalk is formed by the delta and b chains.

It localises to the cell inner membrane. The enzyme catalyses ATP + H2O + 4 H(+)(in) = ADP + phosphate + 5 H(+)(out). Produces ATP from ADP in the presence of a proton gradient across the membrane. The catalytic sites are hosted primarily by the beta subunits. In Rickettsia bellii (strain OSU 85-389), this protein is ATP synthase subunit beta.